Consider the following 318-residue polypeptide: Ubiquitin-like domain-containing CTD phosphatase 1 (318 aa).

Residues 3-81 (LSLIIKWGGQ…IMMMGTREES (79 aa)) enclose the Ubiquitin-like domain. The FCP1 homology domain occupies 133-294 (PREGKKLLVL…LKLTQYLKEI (162 aa)). D143, D145, and D253 together coordinate Mg(2+).

Mg(2+) is required as a cofactor.

The protein resides in the nucleus. It carries out the reaction O-phospho-L-seryl-[protein] + H2O = L-seryl-[protein] + phosphate. The enzyme catalyses O-phospho-L-threonyl-[protein] + H2O = L-threonyl-[protein] + phosphate. Its function is as follows. Dephosphorylates 26S nuclear proteasomes, thereby decreasing their proteolytic activity. Recruited to the 19S regulatory particle of the 26S proteasome where it dephosphorylates 19S component PSMC2 which impairs PSMC2 ATPase activity and disrupts 26S proteasome assembly. Has also been reported to stimulate the proteolytic activity of the 26S proteasome. This chain is Ubiquitin-like domain-containing CTD phosphatase 1 (UBLCP1), found in Gallus gallus (Chicken).